Here is a 445-residue protein sequence, read N- to C-terminus: Glutamate--tRNA ligase 1 (445 aa).

Positions 8–18 (PSPTGKLHVGN) match the 'HIGH' region motif. A 'KMSKS' region motif is present at residues 239 to 243 (KLSKR). Lys-242 is a binding site for ATP.

It belongs to the class-I aminoacyl-tRNA synthetase family. Glutamate--tRNA ligase type 1 subfamily. In terms of assembly, monomer.

It is found in the cytoplasm. The catalysed reaction is tRNA(Glu) + L-glutamate + ATP = L-glutamyl-tRNA(Glu) + AMP + diphosphate. Catalyzes the attachment of glutamate to tRNA(Glu) in a two-step reaction: glutamate is first activated by ATP to form Glu-AMP and then transferred to the acceptor end of tRNA(Glu). The polypeptide is Glutamate--tRNA ligase 1 (Maricaulis maris (strain MCS10) (Caulobacter maris)).